The sequence spans 733 residues: Photosystem I P700 chlorophyll a apoprotein A2 (733 aa).

The next 8 helical transmembrane spans lie at 46 to 69 (IFAS…FHVA), 135 to 158 (LYQG…LHLQ), 175 to 199 (LNHH…HVAI), 273 to 291 (IAHH…GHMY), 330 to 353 (LHFQ…QHMY), 369 to 395 (AALY…IFFV), 417 to 439 (ALIS…LYVH), and 516 to 534 (FLVH…LILV). The [4Fe-4S] cluster site is built by cysteine 558 and cysteine 567. 2 helical membrane-spanning segments follow: residues 574 to 595 (AFYL…YWHW) and 642 to 664 (LSVW…MFLI). Chlorophyll a contacts are provided by histidine 653, methionine 661, and tyrosine 669. A phylloquinone-binding site is contributed by tryptophan 670. The helical transmembrane segment at 706–726 (LVGLAHFTVGYVLTYAAFLIA) threads the bilayer.

This sequence belongs to the PsaA/PsaB family. As to quaternary structure, the PsaA/B heterodimer binds the P700 chlorophyll special pair and subsequent electron acceptors. PSI consists of a core antenna complex that captures photons, and an electron transfer chain that converts photonic excitation into a charge separation. The cyanobacterial PSI reaction center is composed of one copy each of PsaA,B,C,D,E,F,I,J,K,L,M and X, and forms trimeric complexes. It depends on PSI electron transfer chain: 5 chlorophyll a, 1 chlorophyll a', 2 phylloquinones and 3 4Fe-4S clusters. PSI core antenna: 90 chlorophyll a, 22 carotenoids, 3 phospholipids and 1 galactolipid. P700 is a chlorophyll a/chlorophyll a' dimer, A0 is one or more chlorophyll a, A1 is one or both phylloquinones and FX is a shared 4Fe-4S iron-sulfur center. as a cofactor.

Its subcellular location is the cellular thylakoid membrane. The enzyme catalyses reduced [plastocyanin] + hnu + oxidized [2Fe-2S]-[ferredoxin] = oxidized [plastocyanin] + reduced [2Fe-2S]-[ferredoxin]. Its function is as follows. PsaA and PsaB bind P700, the primary electron donor of photosystem I (PSI), as well as the electron acceptors A0, A1 and FX. PSI is a plastocyanin/cytochrome c6-ferredoxin oxidoreductase, converting photonic excitation into a charge separation, which transfers an electron from the donor P700 chlorophyll pair to the spectroscopically characterized acceptors A0, A1, FX, FA and FB in turn. Oxidized P700 is reduced on the lumenal side of the thylakoid membrane by plastocyanin or cytochrome c6. The protein is Photosystem I P700 chlorophyll a apoprotein A2 of Picosynechococcus sp. (strain ATCC 27264 / PCC 7002 / PR-6) (Agmenellum quadruplicatum).